Reading from the N-terminus, the 301-residue chain is Bifunctional protein FolD (301 aa).

NADP(+) contacts are provided by residues 166 to 168, S191, and I232; that span reads GKS.

The protein belongs to the tetrahydrofolate dehydrogenase/cyclohydrolase family. Homodimer.

It catalyses the reaction (6R)-5,10-methylene-5,6,7,8-tetrahydrofolate + NADP(+) = (6R)-5,10-methenyltetrahydrofolate + NADPH. The catalysed reaction is (6R)-5,10-methenyltetrahydrofolate + H2O = (6R)-10-formyltetrahydrofolate + H(+). It participates in one-carbon metabolism; tetrahydrofolate interconversion. Its function is as follows. Catalyzes the oxidation of 5,10-methylenetetrahydrofolate to 5,10-methenyltetrahydrofolate and then the hydrolysis of 5,10-methenyltetrahydrofolate to 10-formyltetrahydrofolate. In Orientia tsutsugamushi (strain Ikeda) (Rickettsia tsutsugamushi), this protein is Bifunctional protein FolD.